A 485-amino-acid chain; its full sequence is Glycogen synthase (485 aa).

Lysine 15 contacts ADP-alpha-D-glucose.

Belongs to the glycosyltransferase 1 family. Bacterial/plant glycogen synthase subfamily.

It carries out the reaction [(1-&gt;4)-alpha-D-glucosyl](n) + ADP-alpha-D-glucose = [(1-&gt;4)-alpha-D-glucosyl](n+1) + ADP + H(+). Its pathway is glycan biosynthesis; glycogen biosynthesis. Synthesizes alpha-1,4-glucan chains using ADP-glucose. This chain is Glycogen synthase (glgA), found in Geobacillus stearothermophilus (Bacillus stearothermophilus).